Reading from the N-terminus, the 627-residue chain is uncharacterized protein (627 aa).

Disordered stretches follow at residues 441–466 (EAVPEGPDGGGPWLEDEPGRGAQGEN) and 608–627 (DLRGTQFDYERGKGESTEDR). Residues 615-627 (DYERGKGESTEDR) show a composition bias toward basic and acidic residues.

This is an uncharacterized protein from Homo sapiens (Human).